Reading from the N-terminus, the 244-residue chain is MIEPLVVEELHYSYPDGTAALRGITLALGTGENVALVGPNGSGKSTLLLHLNGLLLPGRGRIEVGGKPLSASTLEFARRFVGLLFQNPEDQLFMPTVGEDVAFGPQNLGRKGEKLRECVRTALERVGLEPARFLERQSYNLSIGEKKRVALAGVLAMEPEVLVLDEPSAGLDPRSRRRLIRLLTELPQTKLVATHDLDMALETCTRTIIIDRGQVVADGPSDQILADRVLLETHGLELPLSLGR.

Residues 5-237 (LVVEELHYSY…RVLLETHGLE (233 aa)) form the ABC transporter domain. Residue 38-45 (GPNGSGKS) participates in ATP binding.

The protein belongs to the ABC transporter superfamily.

It localises to the cell inner membrane. Its function is as follows. Probably part of an ABC transporter complex. Responsible for energy coupling to the transport system. This is Putative ABC transporter ATP-binding protein gll0289 from Gloeobacter violaceus (strain ATCC 29082 / PCC 7421).